Reading from the N-terminus, the 335-residue chain is Protein-arginine kinase (335 aa).

A Phosphagen kinase C-terminal domain is found at 21–244 (IVMSSRIRLA…NQIIHDEKQI (224 aa)). ATP is bound by residues 24 to 28 (SSRIR), H82, R115, 166 to 170 (RASVM), and 197 to 202 (RGIYGE).

The protein belongs to the ATP:guanido phosphotransferase family.

The enzyme catalyses L-arginyl-[protein] + ATP = N(omega)-phospho-L-arginyl-[protein] + ADP + H(+). In terms of biological role, catalyzes the specific phosphorylation of arginine residues in proteins. This chain is Protein-arginine kinase, found in Staphylococcus aureus (strain Mu3 / ATCC 700698).